The primary structure comprises 543 residues: Phosphoribosylaminoimidazole carboxylase (543 aa).

One can recognise an ATP-grasp domain in the interval 110 to 297; it reads KEHLIKNGIA…QFEAHVRAIT (188 aa). 137-192 provides a ligand contact to ATP; it reads GAKYGFPYMLKSRTMAYDGRGNFVVKDKSYIPEALKVLDDRPLYAEKWAPFSKELA.

In the C-terminal section; belongs to the AIR carboxylase family. Class I subfamily.

It catalyses the reaction 5-amino-1-(5-phospho-D-ribosyl)imidazole-4-carboxylate + H(+) = 5-amino-1-(5-phospho-beta-D-ribosyl)imidazole + CO2. It participates in purine metabolism; IMP biosynthesis via de novo pathway; 5-amino-1-(5-phospho-D-ribosyl)imidazole-4-carboxylate from 5-amino-1-(5-phospho-D-ribosyl)imidazole (carboxylase route): step 1/1. In Ogataea methanolica (Yeast), this protein is Phosphoribosylaminoimidazole carboxylase (ADE1).